The sequence spans 220 residues: Aspartic protease inhibitor 5 (220 aa).

A signal peptide spans 1–23 (MMKCLFLLCLCLLPIVVFSSTFT). Positions 24–32 (SQNLIDLPS) are excised as a propeptide. The Vacuolar targeting signal signature appears at 26 to 31 (NLIDLP). The N-linked (GlcNAc...) asparagine glycan is linked to Asn51. 2 disulfides stabilise this stretch: Cys80–Cys125 and Cys174–Cys185.

This sequence belongs to the protease inhibitor I3 (leguminous Kunitz-type inhibitor) family.

It is found in the vacuole. Its function is as follows. Inhibitor of cathepsin D (aspartic protease). May also inhibit trypsin and chymotrypsin (serine proteases). Protects the plant by inhibiting proteases of invading organisms. The sequence is that of Aspartic protease inhibitor 5 from Solanum tuberosum (Potato).